The primary structure comprises 1835 residues: Protein TIC 214 (1835 aa).

6 helical membrane passes run 25–45 (VGLYYGFLTTFSIGPSYLFLL), 64–84 (FITGQLMMFISIYYAPLHLAL), 87–107 (PHTITVLVLPYLLFHFFWNNH), 124–144 (LSIQCVFLNNLIFQLFNHFIL), 172–192 (VGWLIGHIFFMKWVGLVLFWI), and 221–241 (IFSILLFITCVYYLGRIPSPI). A compositionally biased stretch (basic and acidic residues) spans 246–258 (LKETSETEERGES). Disordered stretches follow at residues 246-304 (LKET…DGNQ), 735-759 (EFKTSDSEEKEAKEKEKTKEEKKEE), and 1535-1578 (NRNQ…KRQS). Positions 259 to 268 (AEETDVEIET) are enriched in acidic residues. Positions 1553–1569 (PRNRQKDLEKDYAESDI) are enriched in basic and acidic residues.

It belongs to the TIC214 family. Part of the Tic complex.

It localises to the plastid. The protein resides in the chloroplast inner membrane. Its function is as follows. Involved in protein precursor import into chloroplasts. May be part of an intermediate translocation complex acting as a protein-conducting channel at the inner envelope. In Liriodendron tulipifera (Tuliptree), this protein is Protein TIC 214.